We begin with the raw amino-acid sequence, 398 residues long: 1,4-beta-D-glucan cellobiohydrolase CEL6C (398 aa).

The signal sequence occupies residues M1–A18. N-linked (GlcNAc...) asparagine glycosylation occurs at N70. D125 is a catalytic residue. D170 functions as the Proton donor in the catalytic mechanism. Residues W218, W318, K346, and E350 each coordinate substrate.

It belongs to the glycosyl hydrolase 6 (cellulase B) family. Post-translationally, both N- and O-glycosylated.

The protein localises to the secreted. It catalyses the reaction Hydrolysis of (1-&gt;4)-beta-D-glucosidic linkages in cellulose and cellotetraose, releasing cellobiose from the non-reducing ends of the chains.. In terms of biological role, exoglucanase that plays an important function in biomass degradation by catalyzing the hydrolysis of the non-reducing end beta-1,4-glucosidic linkages in cellulose and cellotetraose to release cellobiose. Hydrolyzes crystalline and amorphous cellulose but is inactive on hydroxyethyl cellulose, mannan, galactomannan, xyloglucan, arabinoxylan, arabinan, xylan, and pectin. This is 1,4-beta-D-glucan cellobiohydrolase CEL6C from Podospora anserina (strain S / ATCC MYA-4624 / DSM 980 / FGSC 10383) (Pleurage anserina).